The primary structure comprises 146 residues: Large-conductance mechanosensitive channel (146 aa).

Transmembrane regions (helical) follow at residues 15–35 (VSLAIGVVIGGAFSKIVTSLV) and 81–101 (GIFINNIIDFLIVAFSIFIII).

Belongs to the MscL family. Homopentamer.

It localises to the cell membrane. Its function is as follows. Channel that opens in response to stretch forces in the membrane lipid bilayer. May participate in the regulation of osmotic pressure changes within the cell. This Clostridium beijerinckii (strain ATCC 51743 / NCIMB 8052) (Clostridium acetobutylicum) protein is Large-conductance mechanosensitive channel.